Here is a 180-residue protein sequence, read N- to C-terminus: UPF0227 protein VV2369 (180 aa).

This sequence belongs to the UPF0227 family.

The chain is UPF0227 protein VV2369 from Vibrio vulnificus (strain YJ016).